A 575-amino-acid polypeptide reads, in one-letter code: Reverse gyrse subunit B (575 aa).

An RG N-terminal-type; degenerate zinc finger spans residues 1 to 39 (MKIYYNNVCPNCSGRISNERLIKGLPCENDYPYEEGTIE). ATP is bound by residues Gln-83 and 100 to 107 (APTGMGKT). Residues 87 to 247 (FIRAYKGYSF…KLKISGKDLE (161 aa)) form the Helicase ATP-binding domain. The short motif at 204 to 207 (DDVD) is the DEAD box element. One can recognise a Helicase C-terminal domain in the interval 316–465 (QTLELIKKLG…ALKMVEEAIE (150 aa)).

It belongs to the DEAD box helicase family. DDVD subfamily. Heterodimer of an RgyA and RgyB subunit.

It localises to the cytoplasm. It catalyses the reaction ATP + H2O = ADP + phosphate + H(+). Modifies the topological state of DNA by introducing positive supercoils in an ATP-dependent process. Binds to single-stranded DNA, transiently cleaves and then rejoins the end, introducing a positive supercoil in the process. The scissile phosphodiester is attacked by the catalytic tyrosine of the enzyme, resulting in the formation of a DNA-(5'-phosphotyrosyl)-enzyme intermediate. Probably involved in rewinding DNA strands in regions of the chromosome that have opened up to allow replication, transcription, DNA repair or for DNA protection. Reconstituted holoenzyme binds dsDNA a bit better than ssDNA, this subunit preferentially binds dsDNA. In isolation this subunit has DNA-stimulated ATPase activity that is stimulated by topoisomerase-domain containing RgyA. This subunit inhibits the relaxation activity of the topoisomerase subunit while promoting positive supercoiling. This Nanoarchaeum equitans (strain Kin4-M) protein is Reverse gyrse subunit B.